Consider the following 594-residue polypeptide: Potassium-transporting ATPase potassium-binding subunit (594 aa).

A run of 10 helical transmembrane segments spans residues 3 to 23, 67 to 87, 136 to 156, 179 to 199, 287 to 307, 314 to 334, 415 to 435, 453 to 473, 519 to 539, and 562 to 582; these read ADFLGLLLLYLAILLCAAPLL, AVAMLVFNVLGVLAVYALQRL, ALTVQNFVSAATGIAVLIALV, LYVLLPLSFILALALVSQGVV, LEMLAILLIPAALCWTFGEMV, VAILAAMTVLFAGFSASAAYF, GLYGMLAFAILAVFIAGLMIG, VALVILATPALVLAGTAVAVL, VLLGLAMWFGRYTIIVAILAL, and LFVALLVGAVLLVGALTYVPA.

Belongs to the KdpA family. The system is composed of three essential subunits: KdpA, KdpB and KdpC.

Its subcellular location is the cell inner membrane. In terms of biological role, part of the high-affinity ATP-driven potassium transport (or Kdp) system, which catalyzes the hydrolysis of ATP coupled with the electrogenic transport of potassium into the cytoplasm. This subunit binds the periplasmic potassium ions and delivers the ions to the membrane domain of KdpB through an intramembrane tunnel. This Bordetella bronchiseptica (strain ATCC BAA-588 / NCTC 13252 / RB50) (Alcaligenes bronchisepticus) protein is Potassium-transporting ATPase potassium-binding subunit.